A 237-amino-acid chain; its full sequence is MAKSQAGQTVEPEASKLWIHCNSCCALFCDKKHTFFLLACHHVFCERCVKVSAGRTPSDAPIFECSTCRRSVRGRQLTNSMPNHFKQLFHPEPFTIGNDFVETFQRGNHRHFDKYKERKELEMDKLFKDIEVAKSVCQKRFLEAQMLRVERKKLMQRSRYIKAEVANRKAEMHRMAQAYRSRSLTSQSSSSAQRSARGRPRGRGTATQSSSRRRSTESAKRQQITSFIHPPNNSFDL.

An RING-type zinc finger spans residues 21–69 (CNSCCALFCDKKHTFFLLACHHVFCERCVKVSAGRTPSDAPIFECSTCR). The interval 172-237 (MHRMAQAYRS…IHPPNNSFDL (66 aa)) is disordered. The span at 180-195 (RSRSLTSQSSSSAQRS) shows a compositional bias: low complexity. The segment covering 221–237 (RQQITSFIHPPNNSFDL) has biased composition (polar residues).

In terms of assembly, may interact with itself and with narya and nenya through their RING-type zinc fingers. In terms of tissue distribution, expressed in nurse cell and pro-oocytes (at protein level).

It localises to the chromosome. Functionally, required for the formation of DNA double-strand breaks during meiosis together with narya and nenya. The chain is RING finger protein vilya from Drosophila melanogaster (Fruit fly).